Here is a 2566-residue protein sequence, read N- to C-terminus: Zinc finger protein GLI1 (2566 aa).

3 disordered regions span residues 349–375 (HHSSGYVPNHTAPMLRGGKKRSHSQSS), 430–508 (DIRR…RSTG), and 985–1046 (KSIE…GDPD). Polar residues-rich tracts occupy residues 434–444 (TLSSNGNSSHT) and 457–492 (WSPNSPHSSGSGFDNYQTSSHKSLPLPSTLQTYQQH). A compositionally biased stretch (low complexity) spans 493 to 508 (SGYTSTSGSSGNRSTG). The span at 993–1016 (WQNQNVFSSRRNSTRDPSNNNNSG) shows a compositional bias: polar residues. The segment covering 1023-1035 (DEPDVDDDEELDD) has biased composition (acidic residues). The C2H2-type 1; degenerate zinc finger occupies 1088–1110 (RECVRGTRPFKAQYMLVVHMRRH). 3 C2H2-type zinc fingers span residues 1116 to 1140 (HKCIFEGCIKRYSRLENLKTHLRSH), 1146 to 1171 (YQCEIPGCNKAFSNASDRAKHQNRTH), and 1177 to 1202 (YTCKVDGCSKRYTDPSSLRKHVKTVH). Disordered stretches follow at residues 1254–1313 (GNSN…PRDS), 1465–1491 (LSTTSNPVQSLSPSIDNPINSTGTKQK), 1650–1677 (SKNMDNNSQTKNNNELNEENSPQSNQNE), 1727–1791 (AAAS…MDND), and 2067–2091 (MHFSPHSYVHSSSSNSSPFNSNRPH). Low complexity-rich tracts occupy residues 1661 to 1677 (NNNELNEENSPQSNQNE) and 1727 to 1743 (AAASSGIGSGVTTTTAS). Basic residues predominate over residues 1752–1769 (NHHHQKQQPKHSHQHQNR). Residues 1770–1791 (TKSINSDNNYSNQDNVSTMDND) are compositionally biased toward polar residues. Positions 2070–2090 (SPHSYVHSSSSNSSPFNSNRP) are enriched in low complexity.

It belongs to the GLI C2H2-type zinc-finger protein family. As to expression, expressed in female-paired or unpaired males along the ventral surface in neurons and skin tegument cells. In virgin and mature females, expressed bilaterally along the edges of the body in neurons. In mature females, also expressed in skin tegument cells.

Its subcellular location is the nucleus. Functionally, probable transcription factor which plays an essential role in males to trigger female sexual development by inducing NRPS expression in male. NRPS produces the pheromone beta-alanyl-tryptamine (BATT), which stimulates female sexual development. The sequence is that of Zinc finger protein GLI1 from Schistosoma mansoni (Blood fluke).